The sequence spans 722 residues: PAB1-binding protein 1 (722 aa).

The segment covering 1–10 (MKGNFRKRDS) has biased composition (basic and acidic residues). Residues 1 to 38 (MKGNFRKRDSSTNSRKGGNSDSNYTNGGVPNQNNSSMF) are disordered. The span at 11–38 (STNSRKGGNSDSNYTNGGVPNQNNSSMF) shows a compositional bias: polar residues. The Sm domain maps to 51-107 (RQDYLLANSIGSDVTVTVTSGVKYTGLLVSCNLESTNGIDVVLRFPRVADSGVSDSV). S106 carries the post-translational modification Phosphoserine. The residue at position 193 (T193) is a Phosphothreonine. At S215 the chain carries Phosphoserine. Disordered stretches follow at residues 305-380 (ALKS…LSSK), 412-488 (SSTL…NPHT), and 683-722 (GSGP…SGHK). Composition is skewed to low complexity over residues 307–316 (KSNSKPNSNK), 338–347 (SSSNSNKNEN), 356–370 (PAAA…PQKT), and 412–421 (SSTLKSNSSL). Residue K344 forms a Glycyl lysine isopeptide (Lys-Gly) (interchain with G-Cter in ubiquitin) linkage. Positions 429–455 (TPSAKTVSPTTQISAGKSESRRSGSNI) are enriched in polar residues. S436 carries the post-translational modification Phosphoserine. The segment covering 456-471 (SQGQSSTGHTTRSSTS) has biased composition (low complexity). A compositionally biased stretch (basic residues) spans 698-722 (SHGHSRNYHQTSHHGHHNSSTSGHK).

It belongs to the ataxin-2 family. In terms of assembly, interacts (via C-terminus) with MKT1 (via C-terminus). Interacts with FIR1, IGO1, LSM12, PBP4 and PAB1.

The protein localises to the cytoplasm. The protein resides in the nucleus. It localises to the mitochondrion. In terms of biological role, involved in pre-mRNA polyadenylation. May act to repress the ability of PAB1 to negatively regulate polyadenylation. Negative regulator of poly(A) nuclease (PAN) activity. Promotes mating-type switching in mother cells by positively regulating HO mRNA translation. Localizes MKT1 to polysomes. This chain is PAB1-binding protein 1 (PBP1), found in Saccharomyces cerevisiae (strain ATCC 204508 / S288c) (Baker's yeast).